The chain runs to 388 residues: Succinate--CoA ligase [ADP-forming] subunit beta (388 aa).

Residues 9–245 (KELLASYGLP…KSQENERELK (237 aa)) form the ATP-grasp domain. Residues lysine 46, 53-55 (GRG), glutamate 100, tyrosine 103, and glutamate 108 each bind ATP. Positions 200 and 214 each coordinate Mg(2+). Substrate contacts are provided by residues asparagine 265 and 322-324 (GIV).

Belongs to the succinate/malate CoA ligase beta subunit family. In terms of assembly, heterotetramer of two alpha and two beta subunits. The cofactor is Mg(2+).

It carries out the reaction succinate + ATP + CoA = succinyl-CoA + ADP + phosphate. The catalysed reaction is GTP + succinate + CoA = succinyl-CoA + GDP + phosphate. Its pathway is carbohydrate metabolism; tricarboxylic acid cycle; succinate from succinyl-CoA (ligase route): step 1/1. Functionally, succinyl-CoA synthetase functions in the citric acid cycle (TCA), coupling the hydrolysis of succinyl-CoA to the synthesis of either ATP or GTP and thus represents the only step of substrate-level phosphorylation in the TCA. The beta subunit provides nucleotide specificity of the enzyme and binds the substrate succinate, while the binding sites for coenzyme A and phosphate are found in the alpha subunit. The sequence is that of Succinate--CoA ligase [ADP-forming] subunit beta from Neisseria gonorrhoeae (strain ATCC 700825 / FA 1090).